The sequence spans 1234 residues: Anion exchange protein 2 (1234 aa).

The interval 1–239 (MSSAPRRPAS…YNLQERRRIG (239 aa)) is disordered. The Cytoplasmic portion of the chain corresponds to 1 to 704 (MSSAPRRPAS…SDFRDALDPQ (704 aa)). Basic and acidic residues-rich tracts occupy residues 39–49 (LRTLGVERFEE) and 58–75 (GGEEPGRSYGEEDFEYHR). 2 stretches are compositionally biased toward basic residues: residues 76-85 (QSSHHIHHPL) and 94-110 (RRRKTPQGPGRKPRRRP). Residue Ser113 is modified to Phosphoserine. Positions 120–133 (TIEEGEEDEDEVGE) are enriched in acidic residues. 3 positions are modified to phosphoserine: Ser145, Ser171, and Ser173. The span at 207-216 (TAGGDDGGAA) shows a compositional bias: gly residues. Phosphoserine is present on Ser240. Thr254 is subject to Phosphothreonine. Lys271 bears the N6-methyllysine mark. Residues 287-315 (RKNAKGSTQAAREGREPGPTPRARPRAPH) are disordered. Phosphoserine is present on Ser440. The interval 446–467 (SLLGHHHAQGTESDPHVTEPLI) is disordered. Transmembrane regions (helical) follow at residues 705–728 (CLAAVIFIYFAALSPAITFGGLLG), 734–771 (LIGVSELIMSTALQGVIFCLLGAQPLLVIGFSGPLLVF), 791–813 (VWIGFWLVLLALLMVALEGSFLV), and 823–843 (IFAFLISLIFIYETFYKLIKI). The tract at residues 705 to 1234 (CLAAVIFIYF…DEYNEMPMPV (530 aa)) is membrane (anion exchange). Residues 844–893 (FQEHPLHGCSVSNDSEADSSSNNMTWAATTLAPDNSSASGQERPRGQPNT) are Extracellular-facing. Asn856, Asn866, and Asn878 each carry an N-linked (GlcNAc...) asparagine glycan. A helical transmembrane segment spans residues 894 to 911 (ALLSLVLMAGTFFIAFFL). Over 912–926 (RKFKNSRFFPGRIRR) the chain is Cytoplasmic. 5 helical membrane passes run 927–947 (VIGDFGVPIAILIMVLVDYSI), 981–1003 (PFPVWMMVASLLPAVLVFILIFM), 1029–1050 (LLLIVAMGGICALFGLPWLAAA), 1084–1129 (VTGL…IQFY), and 1156–1192 (MHLFTALQLLCLALLWAVMSTAASLAFPFILILTVPL). A lipid anchor (S-palmitoyl cysteine) is attached at Cys1166.

The protein belongs to the anion exchanger (TC 2.A.31) family. As to expression, expressed in the parotid and submandibular glands (at protein level). Expressed in the gastric mucosa (at protein level). Expressed in the choroid plexus epithelium (at protein level). Expressed in the liver and gallbladder.

The protein resides in the apical cell membrane. The protein localises to the basolateral cell membrane. It carries out the reaction hydrogencarbonate(in) + chloride(out) = hydrogencarbonate(out) + chloride(in). With respect to regulation, inhibited by 4,4'-diisothiocyanatostilbene-2,2'-disulfonic acid (DIDS). In terms of biological role, sodium-independent anion exchanger which mediates the electroneutral exchange of chloride for bicarbonate ions across the cell membrane. Plays an important role in osteoclast differentiation and function. Regulates bone resorption and calpain-dependent actin cytoskeleton organization in osteoclasts via anion exchange-dependent control of pH. Essential for intracellular pH regulation in CD8(+) T-cells upon CD3 stimulation, modulating CD8(+) T-cell responses. The sequence is that of Anion exchange protein 2 (Slc4a2) from Rattus norvegicus (Rat).